The sequence spans 388 residues: Succinate--CoA ligase [ADP-forming] subunit beta (388 aa).

An ATP-grasp domain is found at 9–236 (KKLFAEHGVP…VAAVDPLEQK (228 aa)). ATP-binding positions include Lys-45, 52–54 (GRG), Glu-91, Ser-94, and Glu-99. Mg(2+)-binding residues include Asn-191 and Asp-205. Substrate is bound by residues Asn-256 and 318–320 (GIT).

It belongs to the succinate/malate CoA ligase beta subunit family. In terms of assembly, heterotetramer of two alpha and two beta subunits. Mg(2+) is required as a cofactor.

The enzyme catalyses succinate + ATP + CoA = succinyl-CoA + ADP + phosphate. It carries out the reaction GTP + succinate + CoA = succinyl-CoA + GDP + phosphate. It functions in the pathway carbohydrate metabolism; tricarboxylic acid cycle; succinate from succinyl-CoA (ligase route): step 1/1. In terms of biological role, succinyl-CoA synthetase functions in the citric acid cycle (TCA), coupling the hydrolysis of succinyl-CoA to the synthesis of either ATP or GTP and thus represents the only step of substrate-level phosphorylation in the TCA. The beta subunit provides nucleotide specificity of the enzyme and binds the substrate succinate, while the binding sites for coenzyme A and phosphate are found in the alpha subunit. This is Succinate--CoA ligase [ADP-forming] subunit beta from Frankia casuarinae (strain DSM 45818 / CECT 9043 / HFP020203 / CcI3).